The chain runs to 92 residues: UPF0250 protein Pmen_3793 (92 aa).

This sequence belongs to the UPF0250 family.

The polypeptide is UPF0250 protein Pmen_3793 (Ectopseudomonas mendocina (strain ymp) (Pseudomonas mendocina)).